Reading from the N-terminus, the 429-residue chain is Ribosomal RNA small subunit methyltransferase B (429 aa).

S-adenosyl-L-methionine contacts are provided by residues 254 to 260 (CAAPGGK), Asp277, Asp303, and Asp322. Cys375 functions as the Nucleophile in the catalytic mechanism.

The protein belongs to the class I-like SAM-binding methyltransferase superfamily. RsmB/NOP family.

The protein resides in the cytoplasm. It catalyses the reaction cytidine(967) in 16S rRNA + S-adenosyl-L-methionine = 5-methylcytidine(967) in 16S rRNA + S-adenosyl-L-homocysteine + H(+). Functionally, specifically methylates the cytosine at position 967 (m5C967) of 16S rRNA. In Pectobacterium carotovorum subsp. carotovorum (strain PC1), this protein is Ribosomal RNA small subunit methyltransferase B.